The following is a 518-amino-acid chain: ATP synthase subunit beta 2 (518 aa).

154-161 (GGAGVGKT) provides a ligand contact to ATP. Residues 455–518 (IDEAKGKAKP…TDHAADTHES (64 aa)) form a disordered region. 2 stretches are compositionally biased toward basic and acidic residues: residues 473–485 (PDSK…DPKP) and 507–518 (PETDHAADTHES).

The protein belongs to the ATPase alpha/beta chains family. In terms of assembly, F-type ATPases have 2 components, CF(1) - the catalytic core - and CF(0) - the membrane proton channel. CF(1) has five subunits: alpha(3), beta(3), gamma(1), delta(1), epsilon(1). CF(0) has three main subunits: a(1), b(2) and c(9-12). The alpha and beta chains form an alternating ring which encloses part of the gamma chain. CF(1) is attached to CF(0) by a central stalk formed by the gamma and epsilon chains, while a peripheral stalk is formed by the delta and b chains.

It is found in the cell inner membrane. The catalysed reaction is ATP + H2O + 4 H(+)(in) = ADP + phosphate + 5 H(+)(out). Functionally, produces ATP from ADP in the presence of a proton gradient across the membrane. The catalytic sites are hosted primarily by the beta subunits. The chain is ATP synthase subunit beta 2 from Albidiferax ferrireducens (strain ATCC BAA-621 / DSM 15236 / T118) (Rhodoferax ferrireducens).